The sequence spans 457 residues: RuvB-like helicase 1 (457 aa).

Residue 73–80 coordinates ATP; the sequence is GGPSTGKT.

The protein belongs to the RuvB family. May form heterododecamers with RVB2. Component of the SWR1 chromatin remodeling complex, the INO80 chromatin remodeling complex, and of the R2TP complex.

The protein resides in the nucleus. It carries out the reaction ATP + H2O = ADP + phosphate + H(+). Functionally, DNA helicase which participates in several chromatin remodeling complexes, including the SWR1 and the INO80 complexes. The SWR1 complex mediates the ATP-dependent exchange of histone H2A for the H2A variant HZT1 leading to transcriptional regulation of selected genes by chromatin remodeling. The INO80 complex remodels chromatin by shifting nucleosomes and is involved in DNA repair. Also involved in pre-rRNA processing. This is RuvB-like helicase 1 (RVB1) from Candida glabrata (strain ATCC 2001 / BCRC 20586 / JCM 3761 / NBRC 0622 / NRRL Y-65 / CBS 138) (Yeast).